The chain runs to 508 residues: Protein S-acyltransferase 18 (508 aa).

The next 2 membrane-spanning stretches (helical) occupy residues 17-37 and 42-62; these read IVGA…LGFF and IAVI…IVLF. In terms of domain architecture, DHHC spans 158–208; that stretch reads SYCSLCDLEVKRSSKHCRTCNRCVEGFDHHCRWLNNCVGKKNYTTFILLMV. Residue Cys-188 is the S-palmitoyl cysteine intermediate of the active site. The next 2 helical transmembrane spans lie at 203–223 and 250–270; these read FILL…TALA and WALA…SAAM. The tract at residues 443–468 is disordered; that stretch reads VSPGRFSSPRRRFSGSSSSTVPSPKQ. The span at 456-466 shows a compositional bias: low complexity; sequence SGSSSSTVPSP.

It belongs to the DHHC palmitoyltransferase family.

Its subcellular location is the endoplasmic reticulum membrane. It is found in the cytoplasmic vesicle membrane. The catalysed reaction is L-cysteinyl-[protein] + hexadecanoyl-CoA = S-hexadecanoyl-L-cysteinyl-[protein] + CoA. Functionally, S-acyltransferase involved in protein lipid modification. In Arabidopsis thaliana (Mouse-ear cress), this protein is Protein S-acyltransferase 18 (PAT18).